Here is a 568-residue protein sequence, read N- to C-terminus: Methyl-accepting chemotaxis protein CtpH (568 aa).

The Cytoplasmic portion of the chain corresponds to 1–39 (MPASPGHRDVLGCLVAACVPVQPGNPSRRSMLQQSLRAQ). Residues 40-60 (ILVLLGGSLAALLLIALACFG) traverse the membrane as a helical segment. Over 61-216 (SLTGDVRAYR…ISAEARRTML (156 aa)) the chain is Periplasmic. Residues 217–237 (LGSLVLIGASLAVALLSLWLV) form a helical membrane-spanning segment. Residues 238–568 (NRNLVRPVQR…LGDALQRLRA (331 aa)) are Cytoplasmic-facing. Residues 239-291 (RNLVRPVQRLIEHIAQLSHGDFGERIEIRRKDELGKLALAANTLRDFLVDIFD) enclose the HAMP domain. In terms of domain architecture, Methyl-accepting transducer spans 296–532 (STRDLDSASG…EISRNLTEIA (237 aa)).

It belongs to the methyl-accepting chemotaxis (MCP) protein family.

The protein localises to the cell inner membrane. Its function is as follows. Chemotactic-signal transducers respond to changes in the concentration of attractants and repellents in the environment, transduce a signal from the outside to the inside of the cell, and facilitate sensory adaptation through the variation of the level of methylation. Chemoreceptor for inorganic phosphate, which is required for taxis at high concentrations of phosphate. Recognizes inorganic phosphate directly. Can also bind to other components that have a pyrophosphate group, including ATP and ADP. The polypeptide is Methyl-accepting chemotaxis protein CtpH (Pseudomonas aeruginosa (strain ATCC 15692 / DSM 22644 / CIP 104116 / JCM 14847 / LMG 12228 / 1C / PRS 101 / PAO1)).